The sequence spans 269 residues: Phosphonoacetaldehyde hydrolase (269 aa).

The active-site Nucleophile is the aspartate 10. 2 residues coordinate Mg(2+): aspartate 10 and alanine 12. Catalysis depends on lysine 52, which acts as the Schiff-base intermediate with substrate. Position 186 (aspartate 186) interacts with Mg(2+).

It belongs to the HAD-like hydrolase superfamily. PhnX family. In terms of assembly, homodimer. It depends on Mg(2+) as a cofactor.

The catalysed reaction is phosphonoacetaldehyde + H2O = acetaldehyde + phosphate + H(+). Functionally, involved in phosphonate degradation. The protein is Phosphonoacetaldehyde hydrolase of Salmonella heidelberg (strain SL476).